Reading from the N-terminus, the 162-residue chain is MFHIVLVEPEIPPNTGNVIRLAANTGCMLHLVEPLGFSMEDPLMRRAGLDYHEYAEVRRHPGWTALLRDMQPDLSRMFALTTHGTQSVYDTGFLPGDWFVFGAESRGLPPELRETFPPAQRLRLPMLPNQRSLNLSNAVAVTVYEAWRQNSFLTPPTQPQPA.

S-adenosyl-L-methionine is bound by residues L80, G102, L124, and S132.

The protein belongs to the class IV-like SAM-binding methyltransferase superfamily. RNA methyltransferase TrmH family. TrmL subfamily. As to quaternary structure, homodimer.

Its subcellular location is the cytoplasm. It carries out the reaction cytidine(34) in tRNA + S-adenosyl-L-methionine = 2'-O-methylcytidine(34) in tRNA + S-adenosyl-L-homocysteine + H(+). The enzyme catalyses 5-carboxymethylaminomethyluridine(34) in tRNA(Leu) + S-adenosyl-L-methionine = 5-carboxymethylaminomethyl-2'-O-methyluridine(34) in tRNA(Leu) + S-adenosyl-L-homocysteine + H(+). In terms of biological role, methylates the ribose at the nucleotide 34 wobble position in the two leucyl isoacceptors tRNA(Leu)(CmAA) and tRNA(Leu)(cmnm5UmAA). Catalyzes the methyl transfer from S-adenosyl-L-methionine to the 2'-OH of the wobble nucleotide. The protein is tRNA (cytidine(34)-2'-O)-methyltransferase of Acidovorax sp. (strain JS42).